Consider the following 371-residue polypeptide: Enoyl-[acyl-carrier-protein] reductase [NADH] 2, chloroplastic (371 aa).

Residues methionine 1–arginine 67 constitute a chloroplast transit peptide. NAD(+) contacts are provided by residues glycine 87, tyrosine 94, aspartate 151–alanine 152, serine 198–leucine 199, and leucine 248. Residues tyrosine 250 and tyrosine 260 each act as proton acceptor in the active site. Residues lysine 268 and leucine 298–alanine 302 each bind NAD(+).

Belongs to the short-chain dehydrogenases/reductases (SDR) family. FabI subfamily. As to quaternary structure, homotetramer.

The protein localises to the plastid. It is found in the chloroplast. It carries out the reaction a 2,3-saturated acyl-[ACP] + NAD(+) = a (2E)-enoyl-[ACP] + NADH + H(+). It participates in lipid metabolism; fatty acid biosynthesis. Its function is as follows. Catalyzes the NAD-dependent reduction of a carbon-carbon double bond in an enoyl moiety that is covalently linked to an acyl carrier protein (ACP). Catalyzes the last reduction step in the de novo synthesis cycle of fatty acids. Involved in the elongation cycle of fatty acids which are used in lipid metabolism. Required for normal plant growth. The chain is Enoyl-[acyl-carrier-protein] reductase [NADH] 2, chloroplastic from Oryza sativa subsp. japonica (Rice).